Here is a 427-residue protein sequence, read N- to C-terminus: UPF0597 protein FN1147 (427 aa).

Belongs to the UPF0597 family.

The sequence is that of UPF0597 protein FN1147 from Fusobacterium nucleatum subsp. nucleatum (strain ATCC 25586 / DSM 15643 / BCRC 10681 / CIP 101130 / JCM 8532 / KCTC 2640 / LMG 13131 / VPI 4355).